Reading from the N-terminus, the 688-residue chain is Potassium-transporting ATPase ATP-binding subunit (688 aa).

Transmembrane regions (helical) follow at residues 34–54, 62–82, 219–239, and 260–280; these read PVMFVVYLGSGLTTLIWLAIL, ALFTGSVALWLWFTVLFANFA, VALTILLVALTIVFLLATATL, and VLVALLVCLIPTTIGGLLSAI. Residue Asp-313 is the 4-aspartylphosphate intermediate of the active site. Residues Asp-350, Glu-354, 383–390, and Lys-401 contribute to the ATP site; that span reads FSAQTRMS. Mg(2+)-binding residues include Asp-524 and Asp-528. 3 consecutive transmembrane segments (helical) span residues 594 to 614, 622 to 642, and 667 to 687; these read FAIIPAAFAATYPQLNALNVM, AILSAVIFNALIIVFLIPLAL, and GLLVPFVGIKLIDLVLAALIM.

It belongs to the cation transport ATPase (P-type) (TC 3.A.3) family. Type IA subfamily. In terms of assembly, the system is composed of three essential subunits: KdpA, KdpB and KdpC.

Its subcellular location is the cell inner membrane. The catalysed reaction is K(+)(out) + ATP + H2O = K(+)(in) + ADP + phosphate + H(+). Part of the high-affinity ATP-driven potassium transport (or Kdp) system, which catalyzes the hydrolysis of ATP coupled with the electrogenic transport of potassium into the cytoplasm. This subunit is responsible for energy coupling to the transport system and for the release of the potassium ions to the cytoplasm. In Yersinia enterocolitica serotype O:8 / biotype 1B (strain NCTC 13174 / 8081), this protein is Potassium-transporting ATPase ATP-binding subunit.